The chain runs to 215 residues: Protein LURP-one-related 16 (215 aa).

G2 carries the N-myristoyl glycine lipid modification.

Belongs to the LOR family.

Its function is as follows. Might be related to the phospholipid scramblase and tubby-like superfamily of membrane tethered transcription factors. This Arabidopsis thaliana (Mouse-ear cress) protein is Protein LURP-one-related 16.